We begin with the raw amino-acid sequence, 141 residues long: Hemoglobin subunit mu (141 aa).

The Globin domain occupies 1-141 (MLSAQERAQI…VAVVLTEKYR (141 aa)). Heme b-binding residues include H58 and H87.

This sequence belongs to the globin family. In terms of tissue distribution, expressed in erythroid tissues.

The sequence is that of Hemoglobin subunit mu (HBM) from Homo sapiens (Human).